A 341-amino-acid chain; its full sequence is NADH-quinone oxidoreductase subunit H (341 aa).

The next 9 membrane-spanning stretches (helical) occupy residues 4–24 (LVNI…LTYF), 38–58 (PSVV…KLLI), 70–90 (ILFI…WAVI), 115–135 (VGVL…IIAG), 161–181 (IGLI…GEMV), 187–207 (MPFW…ISLL), 239–259 (LFFL…TIFF), 275–295 (IPGL…FIWI), and 314–334 (VFLP…LFTG).

This sequence belongs to the complex I subunit 1 family. In terms of assembly, NDH-1 is composed of 14 different subunits. Subunits NuoA, H, J, K, L, M, N constitute the membrane sector of the complex.

Its subcellular location is the cell membrane. It catalyses the reaction a quinone + NADH + 5 H(+)(in) = a quinol + NAD(+) + 4 H(+)(out). NDH-1 shuttles electrons from NADH, via FMN and iron-sulfur (Fe-S) centers, to quinones in the respiratory chain. The immediate electron acceptor for the enzyme in this species is believed to be ubiquinone. Couples the redox reaction to proton translocation (for every two electrons transferred, four hydrogen ions are translocated across the cytoplasmic membrane), and thus conserves the redox energy in a proton gradient. This subunit may bind ubiquinone. The sequence is that of NADH-quinone oxidoreductase subunit H from Wolbachia pipientis wMel.